We begin with the raw amino-acid sequence, 252 residues long: Deoxyuridine 5'-triphosphate nucleotidohydrolase, mitochondrial (252 aa).

The transit peptide at 1–69 directs the protein to the mitochondrion; sequence MTPLCPRPAL…AGRLSQGCRG (69 aa). 3 positions are modified to phosphoserine: Cys11, Ser88, and Ser99. A disordered region spans residues 78-104; that stretch reads WKGELPKAGGSPAPGPETPAISPSKRA. DUTP contacts are provided by residues 173–175, 187–193, Gly198, Arg241, and 246–247; these read RSG, GVIDEDY, and FG.

Belongs to the dUTPase family. Homotrimer. Requires Mg(2+) as cofactor. Nuclear isoform 2 is phosphorylated in vivo on Ser-11, a reaction that can be catalyzed in vitro by CDC2. Phosphorylation in mature T-cells occurs in a cell cycle-dependent manner. Isoform 3 is not phosphorylated. Found in a variety of tissues. Isoform 3 expression is constitutive, while isoform 2 expression correlates with the onset of DNA replication (at protein level). Isoform 2 degradation coincides with the cessation of nuclear DNA replication (at protein level).

It is found in the nucleus. The protein localises to the mitochondrion. The catalysed reaction is dUTP + H2O = dUMP + diphosphate + H(+). It functions in the pathway pyrimidine metabolism; dUMP biosynthesis; dUMP from dCTP (dUTP route): step 2/2. With respect to regulation, phosphorylation is necessary for activity. Functionally, catalyzes the cleavage of 2'-deoxyuridine 5'-triphosphate (dUTP) into 2'-deoxyuridine 5'-monophosphate (dUMP) and inorganic pyrophosphate and through its action efficiently prevents uracil misincorporation into DNA and at the same time provides dUMP, the substrate for de novo thymidylate biosynthesis. Inhibits peroxisome proliferator-activated receptor (PPAR) activity by binding of its N-terminal to PPAR, preventing the latter's dimerization with retinoid X receptor. Essential for embryonic development. This Homo sapiens (Human) protein is Deoxyuridine 5'-triphosphate nucleotidohydrolase, mitochondrial (DUT).